Here is a 290-residue protein sequence, read N- to C-terminus: Bifunctional protein FolD (290 aa).

NADP(+) is bound by residues 165–167, S194, and I235; that span reads GRG.

The protein belongs to the tetrahydrofolate dehydrogenase/cyclohydrolase family. In terms of assembly, homodimer.

It carries out the reaction (6R)-5,10-methylene-5,6,7,8-tetrahydrofolate + NADP(+) = (6R)-5,10-methenyltetrahydrofolate + NADPH. The enzyme catalyses (6R)-5,10-methenyltetrahydrofolate + H2O = (6R)-10-formyltetrahydrofolate + H(+). The protein operates within one-carbon metabolism; tetrahydrofolate interconversion. Catalyzes the oxidation of 5,10-methylenetetrahydrofolate to 5,10-methenyltetrahydrofolate and then the hydrolysis of 5,10-methenyltetrahydrofolate to 10-formyltetrahydrofolate. In Syntrophotalea carbinolica (strain DSM 2380 / NBRC 103641 / GraBd1) (Pelobacter carbinolicus), this protein is Bifunctional protein FolD.